The primary structure comprises 508 residues: Photosystem II CP47 reaction center protein (508 aa).

Helical transmembrane passes span 21–36, 101–115, 140–156, 203–218, 237–252, and 457–472; these read SVHIMHTALVAGWAGS, IVFSGLCFLAAIWHW, GIHLFLSGVACFGFGAF, IAAGTLGILAGLFHLS, VLSSSIAAVFFAAFVV, and SFALLFFFGHIWHGAR.

This sequence belongs to the PsbB/PsbC family. PsbB subfamily. As to quaternary structure, PSII is composed of 1 copy each of membrane proteins PsbA, PsbB, PsbC, PsbD, PsbE, PsbF, PsbH, PsbI, PsbJ, PsbK, PsbL, PsbM, PsbT, PsbX, PsbY, PsbZ, Psb30/Ycf12, at least 3 peripheral proteins of the oxygen-evolving complex and a large number of cofactors. It forms dimeric complexes. Requires Binds multiple chlorophylls. PSII binds additional chlorophylls, carotenoids and specific lipids. as cofactor.

The protein resides in the plastid. It localises to the chloroplast thylakoid membrane. Functionally, one of the components of the core complex of photosystem II (PSII). It binds chlorophyll and helps catalyze the primary light-induced photochemical processes of PSII. PSII is a light-driven water:plastoquinone oxidoreductase, using light energy to abstract electrons from H(2)O, generating O(2) and a proton gradient subsequently used for ATP formation. The chain is Photosystem II CP47 reaction center protein from Morus indica (Mulberry).